The chain runs to 337 residues: Zinc finger protein Gfi-1b (337 aa).

The tract at residues 1–20 (MPRSFLVKSKKAHTYHQHRF) is mediates repression of transcription. Positions 1–20 (MPRSFLVKSKKAHTYHQHRF) are SNAG domain. 6 C2H2-type zinc fingers span residues 170–193 (YHCVKCNKVFSTPHGLEVHVRRSH), 199–221 (FACEVCGKTFGHAVSLEQHTNIH), 227–249 (FECKMCGKTFKRSSTLSTHLLIH), 255–277 (YPCQYCGKRFHQKSDMKKHTYIH), 283–305 (HKCQVCGKAFSQSSNLITHSRKH), and 311–334 (FSCELCAKGFQRKVDLRRHRETQH).

As to expression, expressed in erythroid cells of primitive and definitive lineage and bone marrow cells.

The protein resides in the nucleus. In terms of biological role, essential transcriptional regulator necessary for development and differentiation of erythroid and megakaryocytic lineages. Alters histone methylation by recruiting histone methyltransferase to target genes promoters. Plays a role in heterochromatin formation. This chain is Zinc finger protein Gfi-1b (GFI1B), found in Gallus gallus (Chicken).